Reading from the N-terminus, the 208-residue chain is FMN-dependent NADH:quinone oxidoreductase 4 (208 aa).

The protein belongs to the azoreductase type 1 family. As to quaternary structure, homodimer. The cofactor is FMN.

It carries out the reaction 2 a quinone + NADH + H(+) = 2 a 1,4-benzosemiquinone + NAD(+). The catalysed reaction is N,N-dimethyl-1,4-phenylenediamine + anthranilate + 2 NAD(+) = 2-(4-dimethylaminophenyl)diazenylbenzoate + 2 NADH + 2 H(+). Functionally, quinone reductase that provides resistance to thiol-specific stress caused by electrophilic quinones. Its function is as follows. Also exhibits azoreductase activity. Catalyzes the reductive cleavage of the azo bond in aromatic azo compounds to the corresponding amines. The chain is FMN-dependent NADH:quinone oxidoreductase 4 from Bacillus anthracis.